Reading from the N-terminus, the 225-residue chain is 2-C-methyl-D-erythritol 4-phosphate cytidylyltransferase (225 aa).

It belongs to the IspD/TarI cytidylyltransferase family. IspD subfamily.

The catalysed reaction is 2-C-methyl-D-erythritol 4-phosphate + CTP + H(+) = 4-CDP-2-C-methyl-D-erythritol + diphosphate. The protein operates within isoprenoid biosynthesis; isopentenyl diphosphate biosynthesis via DXP pathway; isopentenyl diphosphate from 1-deoxy-D-xylulose 5-phosphate: step 2/6. Catalyzes the formation of 4-diphosphocytidyl-2-C-methyl-D-erythritol from CTP and 2-C-methyl-D-erythritol 4-phosphate (MEP). The polypeptide is 2-C-methyl-D-erythritol 4-phosphate cytidylyltransferase (Clostridium perfringens (strain ATCC 13124 / DSM 756 / JCM 1290 / NCIMB 6125 / NCTC 8237 / Type A)).